We begin with the raw amino-acid sequence, 62 residues long: Ferredoxin-3 (62 aa).

4Fe-4S ferredoxin-type domains follow at residues 2–28 (SLKITEECTFCAACEPECPVNAISAGS) and 29–62 (DIYVIDESACTECEGYADSPACVAVCPAECIVKA). C9, C12, C15, C19, C38, C41, C50, and C54 together coordinate [4Fe-4S] cluster.

The cofactor is [4Fe-4S] cluster.

Functionally, ferredoxins are iron-sulfur proteins that transfer electrons in a wide variety of metabolic reactions. This Chlorobaculum tepidum (strain ATCC 49652 / DSM 12025 / NBRC 103806 / TLS) (Chlorobium tepidum) protein is Ferredoxin-3.